We begin with the raw amino-acid sequence, 438 residues long: Lipid-A-disaccharide synthase (438 aa).

This sequence belongs to the LpxB family.

The catalysed reaction is a lipid X + a UDP-2-N,3-O-bis[(3R)-3-hydroxyacyl]-alpha-D-glucosamine = a lipid A disaccharide + UDP + H(+). Its pathway is bacterial outer membrane biogenesis; LPS lipid A biosynthesis. In terms of biological role, condensation of UDP-2,3-diacylglucosamine and 2,3-diacylglucosamine-1-phosphate to form lipid A disaccharide, a precursor of lipid A, a phosphorylated glycolipid that anchors the lipopolysaccharide to the outer membrane of the cell. This Xanthomonas campestris pv. campestris (strain 8004) protein is Lipid-A-disaccharide synthase.